The sequence spans 306 residues: Porphobilinogen deaminase (306 aa).

Cysteine 239 is modified (S-(dipyrrolylmethanemethyl)cysteine).

The protein belongs to the HMBS family. In terms of assembly, monomer. Requires dipyrromethane as cofactor.

It catalyses the reaction 4 porphobilinogen + H2O = hydroxymethylbilane + 4 NH4(+). Its pathway is porphyrin-containing compound metabolism; protoporphyrin-IX biosynthesis; coproporphyrinogen-III from 5-aminolevulinate: step 2/4. In terms of biological role, tetrapolymerization of the monopyrrole PBG into the hydroxymethylbilane pre-uroporphyrinogen in several discrete steps. This Helicobacter pylori (strain G27) protein is Porphobilinogen deaminase.